Here is a 520-residue protein sequence, read N- to C-terminus: Cytochrome P450 84A1 (520 aa).

An N-acetylmethionine modification is found at methionine 1. The chain crosses the membrane as a helical span at residues 12–32 (LSDPTTSLVIVVSLFIFISFI). Cysteine 458 is a heme binding site.

This sequence belongs to the cytochrome P450 family. Heme serves as cofactor.

Its subcellular location is the membrane. It participates in aromatic compound metabolism; phenylpropanoid biosynthesis. The chain is Cytochrome P450 84A1 (CYP84A1) from Arabidopsis thaliana (Mouse-ear cress).